The sequence spans 535 residues: EH domain-containing protein 3 (535 aa).

Met1 carries the N-acetylmethionine modification. The Dynamin-type G domain occupies 55-286 (FDNKPMVLLV…DLFKDIQSLP (232 aa)). Positions 65–72 (GQYSTGKT) are G1 motif. 65–72 (GQYSTGKT) serves as a coordination point for ATP. The G2 motif stretch occupies residues 91–92 (EP). The G3 motif stretch occupies residues 153–156 (DTPG). A coiled-coil region spans residues 198 to 227 (DEFSEVIKALKNHEDKMRVVLNKADQIETQ). Residues 219–222 (NKAD) form a G4 motif region. Residue Lys220 coordinates ATP. Ile243 is a region of interest (G5 motif). Trp258 contributes to the ATP binding site. Lys315 participates in a covalent cross-link: Glycyl lysine isopeptide (Lys-Gly) (interchain with G-Cter in SUMO). Phosphoserine occurs at positions 349 and 456. Positions 444-532 (DKPMYDEIFY…AHLLPPSKRK (89 aa)) constitute an EH domain. The 36-residue stretch at 476–511 (LPNSVLGKIWKLADIDKDGMLDDEEFALANHLIKVK) folds into the EF-hand domain. Positions 489, 491, 493, 495, and 500 each coordinate Ca(2+). A Glycyl lysine isopeptide (Lys-Gly) (interchain with G-Cter in SUMO) cross-link involves residue Lys511.

The protein belongs to the TRAFAC class dynamin-like GTPase superfamily. Dynamin/Fzo/YdjA family. EHD subfamily. Homooligomer, and heterooligomer with EHD1, EHD2 and EHD4, ATP-binding is required for heterooligomerization. Interacts with PACSIN1. Interacts with PACSIN2. Interacts (via EH domain) with MICALL1. Interacts (via EH domain) with RAB11FIP2. Interacts with ANK2. Interacts with CACNA1GG and CACNA1H.

It localises to the recycling endosome membrane. It is found in the cell membrane. The protein localises to the cell projection. The protein resides in the cilium membrane. In terms of biological role, ATP- and membrane-binding protein that controls membrane reorganization/tubulation upon ATP hydrolysis. In vitro causes tubulation of endocytic membranes. Binding to phosphatidic acid induces its membrane tubulation activity. Plays a role in endocytic transport. Involved in early endosome to recycling endosome compartment (ERC), retrograde early endosome to Golgi, and endosome to plasma membrane (rapid recycling) protein transport. Involved in the regulation of Golgi maintenance and morphology. Involved in the recycling of internalized D1 dopamine receptor. Plays a role in cardiac protein trafficking probably implicating ANK2. Involved in the ventricular membrane targeting of SLC8A1 and CACNA1C and probably the atrial membrane localization of CACNA1GG and CACNA1H implicated in the regulation of atrial myocyte excitability and cardiac conduction. In conjunction with EHD4 may be involved in endocytic trafficking of KDR/VEGFR2 implicated in control of glomerular function. Involved in the rapid recycling of integrin beta-3 implicated in cell adhesion maintenance. Involved in the unidirectional retrograde dendritic transport of endocytosed BACE1 and in efficient sorting of BACE1 to axons implicating a function in neuronal APP processing. Plays a role in the formation of the ciliary vesicle, an early step in cilium biogenesis; possibly sharing redundant functions with Ehd1. The sequence is that of EH domain-containing protein 3 from Rattus norvegicus (Rat).